We begin with the raw amino-acid sequence, 214 residues long: Probable nicotinate-nucleotide adenylyltransferase (214 aa).

This sequence belongs to the NadD family.

It carries out the reaction nicotinate beta-D-ribonucleotide + ATP + H(+) = deamido-NAD(+) + diphosphate. The protein operates within cofactor biosynthesis; NAD(+) biosynthesis; deamido-NAD(+) from nicotinate D-ribonucleotide: step 1/1. Functionally, catalyzes the reversible adenylation of nicotinate mononucleotide (NaMN) to nicotinic acid adenine dinucleotide (NaAD). This chain is Probable nicotinate-nucleotide adenylyltransferase, found in Aeromonas salmonicida (strain A449).